The following is a 442-amino-acid chain: 3-isopropylmalate dehydratase large subunit (442 aa).

Cysteine 347, cysteine 407, and cysteine 410 together coordinate [4Fe-4S] cluster.

This sequence belongs to the aconitase/IPM isomerase family. LeuC type 1 subfamily. As to quaternary structure, heterodimer of LeuC and LeuD. [4Fe-4S] cluster serves as cofactor.

It catalyses the reaction (2R,3S)-3-isopropylmalate = (2S)-2-isopropylmalate. Its pathway is amino-acid biosynthesis; L-leucine biosynthesis; L-leucine from 3-methyl-2-oxobutanoate: step 2/4. Catalyzes the isomerization between 2-isopropylmalate and 3-isopropylmalate, via the formation of 2-isopropylmaleate. The sequence is that of 3-isopropylmalate dehydratase large subunit from Buchnera aphidicola subsp. Uroleucon helianthicola.